Reading from the N-terminus, the 559-residue chain is POU domain protein 1 (559 aa).

The POU-specific domain maps to 259–333 (EDLPSSDDLE…LLQKWLHEAD (75 aa)). The segment at residues 351–410 (KRKKRTSIEANVKSILESSFMKLSKPSAQDISSLAEKLSLEKEVVRVWFCNRRQKEKRIT) is a DNA-binding region (homeobox).

This sequence belongs to the POU transcription factor family.

The protein localises to the nucleus. This chain is POU domain protein 1 (POU1), found in Dugesia japonica (Planarian).